The sequence spans 766 residues: Semaphorin-4E (766 aa).

The first 24 residues, 1 to 24 (MMSLLAVLCVLYVWSPAMLTGGLG), serve as a signal peptide directing secretion. The Extracellular segment spans residues 25-664 (STLDSLPRKT…LHHVKEKERT (640 aa)). Positions 27-499 (LDSLPRKTVP…SEVGVVQLSI (473 aa)) constitute a Sema domain. Asn52 carries N-linked (GlcNAc...) asparagine glycosylation. 4 cysteine pairs are disulfide-bonded: Cys100/Cys111, Cys129/Cys138, Cys261/Cys373, and Cys285/Cys329. An N-linked (GlcNAc...) asparagine glycan is attached at Asn433. The 52-residue stretch at 501–552 (ECGRYQTCLDCVLARDPHCGWDLDTEHCATINSIHRTRSSTVIQSLNDGDAS) folds into the PSI domain. Disulfide bonds link Cys502–Cys519 and Cys511–Cys528. The Ig-like C2-type domain occupies 555–640 (PAIGVSKPVN…QRKYQTQHVA (86 aa)). Residues Asn564 and Asn612 are each glycosylated (N-linked (GlcNAc...) asparagine). Cysteines 577 and 623 form a disulfide. The helical transmembrane segment at 665–685 (LVAMVVILSLVLAALLIWNLY) threads the bilayer. Topologically, residues 686 to 766 (KGHLSLPCLH…LKYIDDESEI (81 aa)) are cytoplasmic. Residues 724–750 (FNSNNNHANDQRYSSSRETDRLSTTAG) form a disordered region.

Belongs to the semaphorin family.

The protein localises to the membrane. This Danio rerio (Zebrafish) protein is Semaphorin-4E (sema4e).